The sequence spans 258 residues: D-beta-hydroxybutyrate dehydrogenase (258 aa).

An NAD(+)-binding site is contributed by 6-30 (VITGSTSGIGLAIARTLAKAGANIV). Serine 140 provides a ligand contact to substrate. Catalysis depends on tyrosine 153, which acts as the Proton acceptor.

The protein belongs to the short-chain dehydrogenases/reductases (SDR) family.

The catalysed reaction is (R)-3-hydroxybutanoate + NAD(+) = acetoacetate + NADH + H(+). The polypeptide is D-beta-hydroxybutyrate dehydrogenase (bdhA) (Rhizobium meliloti (strain 1021) (Ensifer meliloti)).